Here is a 238-residue protein sequence, read N- to C-terminus: Probable transcriptional regulatory protein VV2_1184 (238 aa).

The protein belongs to the TACO1 family.

Its subcellular location is the cytoplasm. In Vibrio vulnificus (strain CMCP6), this protein is Probable transcriptional regulatory protein VV2_1184.